We begin with the raw amino-acid sequence, 86 residues long: U15-lycotoxin-Ls1c (86 aa).

A signal peptide spans 1 to 20; the sequence is MNSKIFAVLLLLAFLSCVLS. Residues 21-66 form the WAP domain; it reads DQYCPKSSITACKKMNIRNDCCKDDDCTGGSWCCATPCGNICKYPT. Intrachain disulfides connect cysteine 24-cysteine 54, cysteine 32-cysteine 58, cysteine 41-cysteine 53, cysteine 42-cysteine 80, and cysteine 47-cysteine 62.

It belongs to the venom protein 11 family. 01 (wap-1) subfamily. In terms of processing, contains 5 disulfide bonds. In terms of tissue distribution, expressed by the venom gland.

The protein resides in the secreted. In terms of biological role, has antibacterial activity. The polypeptide is U15-lycotoxin-Ls1c (Lycosa singoriensis (Wolf spider)).